Consider the following 463-residue polypeptide: POU domain, class 2, transcription factor 2 (463 aa).

Disordered stretches follow at residues 1–87 (MVHS…QPHL), 159–182 (QPRA…EEPS), 259–282 (SSLP…GRRR), 341–376 (PCSA…LSQA), and 393–463 (TLHP…PYQP). Positions 12-37 (RMSKPLEAEKQSLDSPSEHTDTERNG) are enriched in basic and acidic residues. Residues 41–60 (NHQNPQNKASPFSVSPTGPS) show a composition bias toward polar residues. Over residues 75-85 (AAPPPPQPAQP) the composition is skewed to pro residues. The region spanning 179–253 (EEPSDLEELE…LLEKWLNDAE (75 aa)) is the POU-specific domain. Over residues 259-272 (SSLPSPNQLSSPSL) the composition is skewed to low complexity. Residues 281-340 (RRKKRTSIETNVRFALEKSFLANQKPTSEEILLIAEQLHMEKEVIRVWFCNRRQKEKRIN) constitute a DNA-binding region (homeobox). The segment at 373-394 (LSQASSSLSTTVTTLSSAVGTL) is leucine-zipper. Positions 400-409 (AGGGGGGGGA) are enriched in gly residues.

The protein belongs to the POU transcription factor family. Class-2 subfamily. Interacts with NR3C1, AR and PGR. Interacts with POU2AF1; the interaction increases POU2F2 transactivation activity. Highest in B cells, but also present in brain (neuronal and glial cells), intestine, kidney, and testes. In terms of tissue distribution, expressed at higher levels in B-cells than in neuronal cells. As to expression, expressed in neuronal cell lines and brain, but not dorsal root ganglia. Expressed at lower levels in neuronal cells than in B cells. In terms of tissue distribution, expressed in neuronal cell lines, and at lower levels in neuroblastoma and dorsal root ganglia. As to expression, widely expressed in the developing nervous system but expression is confined to very specific regions in the adult brain, it is expressed at a lower level in B cells. Either absent in, or expressed at very low levels in neuronal cells and brain. In terms of tissue distribution, expressed in all tissues tested: mammary gland, liver, spleen, lung, kidney intestine, uterus and ovary of a virgin mouse. Levels of isoform OCT2.7 are highest in spleen and lung. In mammary gland, expression is localized to the alveolus epithelial cells.

It is found in the cytoplasm. The protein localises to the nucleus. Its activity is regulated as follows. Transactivation activity is enhanced by transcriptional coactivator POU2AF1. In terms of biological role, transcription factor that specifically binds to the octamer motif (5'-ATTTGCAT-3'). Regulates IL6 expression in B cells with POU2AF1. Regulates transcription in a number of tissues in addition to activating immunoglobulin gene expression. Modulates transcription transactivation by NR3C1, AR and PGR. Its function is as follows. Activates octamer-containing promoters. Functionally, represses some promoters and activate others. Represses some promoters and activate others. Activates the U2 small nuclear RNA (snRNA) promoter. In terms of biological role, unable to bind to the octamer motif, but can still activate the beta-casein gene promoter at low levels. In Mus musculus (Mouse), this protein is POU domain, class 2, transcription factor 2.